The chain runs to 360 residues: Photosystem II protein D1 (360 aa).

3 helical membrane passes run Tyr29–Ser46, His118–Leu133, and Trp142–Ala156. His118 is a binding site for chlorophyll a. Tyr126 serves as a coordination point for pheophytin a. The [CaMn4O5] cluster site is built by Asp170 and Glu189. The helical transmembrane segment at Phe197–Leu218 threads the bilayer. His198 serves as a coordination point for chlorophyll a. Residues His215 and Ser264–Phe265 contribute to the a quinone site. Fe cation is bound at residue His215. A Fe cation-binding site is contributed by His272. A helical transmembrane segment spans residues Phe274–Met288. Residues His332, Glu333, Asp342, and Ala344 each coordinate [CaMn4O5] cluster. Positions Ser345–Gly360 are excised as a propeptide.

This sequence belongs to the reaction center PufL/M/PsbA/D family. In terms of assembly, PSII is composed of 1 copy each of membrane proteins PsbA, PsbB, PsbC, PsbD, PsbE, PsbF, PsbH, PsbI, PsbJ, PsbK, PsbL, PsbM, PsbT, PsbX, PsbY, PsbZ, Psb30/Ycf12, at least 3 peripheral proteins of the oxygen-evolving complex and a large number of cofactors. It forms dimeric complexes. Requires The D1/D2 heterodimer binds P680, chlorophylls that are the primary electron donor of PSII, and subsequent electron acceptors. It shares a non-heme iron and each subunit binds pheophytin, quinone, additional chlorophylls, carotenoids and lipids. D1 provides most of the ligands for the Mn4-Ca-O5 cluster of the oxygen-evolving complex (OEC). There is also a Cl(-1) ion associated with D1 and D2, which is required for oxygen evolution. The PSII complex binds additional chlorophylls, carotenoids and specific lipids. as cofactor. Tyr-161 forms a radical intermediate that is referred to as redox-active TyrZ, YZ or Y-Z. In terms of processing, C-terminally processed by CTPA; processing is essential to allow assembly of the oxygen-evolving complex and thus photosynthetic growth.

It is found in the plastid. The protein localises to the chloroplast thylakoid membrane. It carries out the reaction 2 a plastoquinone + 4 hnu + 2 H2O = 2 a plastoquinol + O2. Its function is as follows. Photosystem II (PSII) is a light-driven water:plastoquinone oxidoreductase that uses light energy to abstract electrons from H(2)O, generating O(2) and a proton gradient subsequently used for ATP formation. It consists of a core antenna complex that captures photons, and an electron transfer chain that converts photonic excitation into a charge separation. The D1/D2 (PsbA/PsbD) reaction center heterodimer binds P680, the primary electron donor of PSII as well as several subsequent electron acceptors. This is Photosystem II protein D1 from Palmaria palmata (Dulse).